The primary structure comprises 189 residues: UPF0232 protein MLBr00004 (189 aa).

Residues T59–L78 are disordered.

This sequence belongs to the UPF0232 family.

The polypeptide is UPF0232 protein MLBr00004 (Mycobacterium leprae (strain Br4923)).